The chain runs to 149 residues: Cytochrome c-type biogenesis protein CcmE (149 aa).

Topologically, residues 1-7 (MTRKQKR) are cytoplasmic. A helical; Signal-anchor for type II membrane protein membrane pass occupies residues 8–28 (LAVIAGGVGFIMVAVLLVLFA). At 29 to 149 (FGQSIAYFYM…GVWKGEGEAK (121 aa)) the chain is on the periplasmic side. Residues His-123 and Tyr-127 each contribute to the heme site.

Belongs to the CcmE/CycJ family.

The protein resides in the cell inner membrane. Heme chaperone required for the biogenesis of c-type cytochromes. Transiently binds heme delivered by CcmC and transfers the heme to apo-cytochromes in a process facilitated by CcmF and CcmH. The chain is Cytochrome c-type biogenesis protein CcmE from Allorhizobium ampelinum (strain ATCC BAA-846 / DSM 112012 / S4) (Agrobacterium vitis (strain S4)).